The primary structure comprises 449 residues: Cortexillin-2 (449 aa).

The tract at residues 1–231 (MTDLHKEWEK…ILYTSLFFHA (231 aa)) is actin-binding. 2 Calponin-homology (CH) domains span residues 10–119 (KVQE…RKYR) and 128–233 (KSSE…HAYR). Coiled-coil stretches lie at residues 232-364 (YRAK…AEGL) and 408-441 (QFEEQAKRLGSKVENENISLEKYLSLKEEELKSA).

The protein belongs to the cortexillin family. Homodimer; parallel.

The protein resides in the cytoplasm. The protein localises to the cytoskeleton. Functionally, actin-bundling protein. When linked to F-actin the actin filaments form preferentially anti-parallel bundles that associate into meshworks. Plays a major role in cytokinesis. The protein is Cortexillin-2 (ctxB) of Heterostelium pallidum (strain ATCC 26659 / Pp 5 / PN500) (Cellular slime mold).